A 361-amino-acid polypeptide reads, in one-letter code: Ornithine carbamoyltransferase, mitochondrial (361 aa).

The N-terminal 24 residues, 1–24, are a transit peptide targeting the mitochondrion; sequence MIPTARCGALRQKIPVQAVRQYSS. Carbamoyl phosphate is bound by residues 89–92, arginine 140, histidine 167, and glutamine 170; that span reads STRT. L-ornithine is bound by residues asparagine 207, aspartate 273, serine 277, and methionine 278. The active-site Proton acceptor is cysteine 315. Residues 315-316 and arginine 342 each bind carbamoyl phosphate; that span reads CL.

It belongs to the aspartate/ornithine carbamoyltransferase superfamily. OTCase family. As to quaternary structure, homotrimer.

Its subcellular location is the mitochondrion matrix. The enzyme catalyses carbamoyl phosphate + L-ornithine = L-citrulline + phosphate + H(+). It functions in the pathway amino-acid biosynthesis; L-arginine biosynthesis; L-arginine from L-ornithine and carbamoyl phosphate: step 1/3. This chain is Ornithine carbamoyltransferase, mitochondrial (arg1), found in Aspergillus terreus.